The sequence spans 427 residues: Glutamate-1-semialdehyde 2,1-aminomutase (427 aa).

Lys-265 is subject to N6-(pyridoxal phosphate)lysine.

The protein belongs to the class-III pyridoxal-phosphate-dependent aminotransferase family. HemL subfamily. In terms of assembly, homodimer. Requires pyridoxal 5'-phosphate as cofactor.

It is found in the cytoplasm. It catalyses the reaction (S)-4-amino-5-oxopentanoate = 5-aminolevulinate. Its pathway is porphyrin-containing compound metabolism; protoporphyrin-IX biosynthesis; 5-aminolevulinate from L-glutamyl-tRNA(Glu): step 2/2. This chain is Glutamate-1-semialdehyde 2,1-aminomutase, found in Bordetella pertussis (strain Tohama I / ATCC BAA-589 / NCTC 13251).